Consider the following 452-residue polypeptide: Trigger factor (452 aa).

Residues Gly170–Leu255 enclose the PPIase FKBP-type domain.

Belongs to the FKBP-type PPIase family. Tig subfamily.

It localises to the cytoplasm. It carries out the reaction [protein]-peptidylproline (omega=180) = [protein]-peptidylproline (omega=0). Involved in protein export. Acts as a chaperone by maintaining the newly synthesized protein in an open conformation. Functions as a peptidyl-prolyl cis-trans isomerase. The chain is Trigger factor from Xanthobacter autotrophicus (strain ATCC BAA-1158 / Py2).